The primary structure comprises 20 residues: EGPVGLADPDGPASAPLGAP.

Residues 1 to 20 (EGPVGLADPDGPASAPLGAP) are disordered.

Its subcellular location is the secreted. In terms of biological role, the synthetic peptide inhibits growth of fungus P.capsici and partially that of V.dahliae, F.graminearum and F.omysporum. This chain is Antimicrobial peptide EP-20, found in Xenorhabdus budapestensis.